Here is a 234-residue protein sequence, read N- to C-terminus: MTYKRVLLKLSGEALMGEKPYGIDPAIVQSIAEDVLKVVEKNVQLAIVVGGGNIFRGLKGSADGMDRATADYVGMLATVMNAISLQDGLERVGVATRVQTAIEMQEIAEPYIRRRAMRHLEKGRVVVFGGGCGNPFFTTDTTAALRAAEINAEVVMKATKVDGVYDCDPNQFKDAKKYSSLSYQRVLSDEIAVMDSTAIALCKDNNIPIMVFDIFKKGNISKAVAGEPIGSLIS.

K9–G12 is a binding site for ATP. G51 contacts UMP. 2 residues coordinate ATP: G52 and R56. UMP-binding positions include D71 and C132–T139. ATP contacts are provided by T159, Y165, and D168.

Belongs to the UMP kinase family. Homohexamer.

It is found in the cytoplasm. It catalyses the reaction UMP + ATP = UDP + ADP. It participates in pyrimidine metabolism; CTP biosynthesis via de novo pathway; UDP from UMP (UMPK route): step 1/1. Inhibited by UTP. In terms of biological role, catalyzes the reversible phosphorylation of UMP to UDP. This Prochlorococcus marinus (strain MIT 9215) protein is Uridylate kinase.